The primary structure comprises 334 residues: Amino acid--[acyl-carrier-protein] ligase 2 (334 aa).

Cysteine 131 is a binding site for Zn(2+). ATP-binding positions include arginine 159, glutamate 161, and 168–169; that span reads RL. Glutamate 176 is a binding site for Zn(2+). Residue glutamate 176 participates in an L-alpha-amino acid binding. ATP-binding positions include lysine 235 and 250-253; that span reads ACMS. Cysteine 279 contributes to the Zn(2+) binding site. Position 286 (arginine 286) interacts with ATP.

Belongs to the class-II aminoacyl-tRNA synthetase family. Amino acid--[acyl-carrier-protein] ligase subfamily. In terms of assembly, homodimer. Requires Zn(2+) as cofactor.

The enzyme catalyses an L-alpha-amino acid + holo-[ACP] + ATP = an L-alpha-aminoacyl-[ACP] + AMP + diphosphate. Its function is as follows. Catalyzes the ATP-dependent activation of L-glycine and its transfer to the phosphopantetheine prosthetic group covalently attached to the vicinal carrier protein blr6284 of yet unknown function. May participate in nonribosomal peptide synthesis or related processes. L-alanine is a poor substrate whereas L-serine or D-amino acids are not substrates for ATP-dependent activation. Does not display tRNA aminoacylation activity. This Bradyrhizobium diazoefficiens (strain JCM 10833 / BCRC 13528 / IAM 13628 / NBRC 14792 / USDA 110) protein is Amino acid--[acyl-carrier-protein] ligase 2.